We begin with the raw amino-acid sequence, 138 residues long: UPF0355 protein SSP2326 (138 aa).

The segment at 115-138 (NVAFETNQTKSNSHYSEETNGPKS) is disordered. Residues 118–138 (FETNQTKSNSHYSEETNGPKS) show a composition bias toward polar residues.

Belongs to the UPF0355 family.

The sequence is that of UPF0355 protein SSP2326 from Staphylococcus saprophyticus subsp. saprophyticus (strain ATCC 15305 / DSM 20229 / NCIMB 8711 / NCTC 7292 / S-41).